The chain runs to 431 residues: Neuronal pentraxin-2 (431 aa).

An N-terminal signal peptide occupies residues 1–15 (MLALLAASVALAVAA). N-linked (GlcNAc...) asparagine glycosylation is found at Asn148 and Asn189. The Pentraxin (PTX) domain occupies 223 to 424 (DAFKVSLPLR…GASKWPVETC (202 aa)). Cys253 and Cys313 are oxidised to a cystine. Residues Asn277, Glu355, Gln356, Asp357, and Gln367 each coordinate Ca(2+). Asn393 carries an N-linked (GlcNAc...) asparagine glycan.

In terms of assembly, homooligomer or heterooligomer (probably pentamer) with neuronal pentraxin receptor (NPTXR). It depends on Ca(2+) as a cofactor. In terms of tissue distribution, brain, pancreas, liver, heart and skeletal muscle. Highest levels are seen in the testis.

The protein localises to the secreted. Its function is as follows. Likely to play role in the modification of cellular properties that underlie long-term plasticity. Binds to agar matrix in a calcium-dependent manner. The sequence is that of Neuronal pentraxin-2 (NPTX2) from Homo sapiens (Human).